We begin with the raw amino-acid sequence, 691 residues long: DNA-directed RNA polymerase subunit beta' (691 aa).

Zn(2+) is bound by residues Cys-69, Cys-71, Cys-87, and Cys-90. Residues Asp-489, Asp-491, and Asp-493 each coordinate Mg(2+).

The protein belongs to the RNA polymerase beta' chain family. RpoC1 subfamily. In terms of assembly, in plastids the minimal PEP RNA polymerase catalytic core is composed of four subunits: alpha, beta, beta', and beta''. When a (nuclear-encoded) sigma factor is associated with the core the holoenzyme is formed, which can initiate transcription. Mg(2+) is required as a cofactor. It depends on Zn(2+) as a cofactor.

The protein resides in the plastid. It is found in the chloroplast. It carries out the reaction RNA(n) + a ribonucleoside 5'-triphosphate = RNA(n+1) + diphosphate. DNA-dependent RNA polymerase catalyzes the transcription of DNA into RNA using the four ribonucleoside triphosphates as substrates. The protein is DNA-directed RNA polymerase subunit beta' of Jasminum nudiflorum (Winter jasmine).